The sequence spans 361 residues: Mannonate dehydratase 1 (361 aa).

This sequence belongs to the mannonate dehydratase family. Requires Fe(2+) as cofactor. Mn(2+) is required as a cofactor.

It catalyses the reaction D-mannonate = 2-dehydro-3-deoxy-D-gluconate + H2O. Its pathway is carbohydrate metabolism; pentose and glucuronate interconversion. Catalyzes the dehydration of D-mannonate. In Halalkalibacterium halodurans (strain ATCC BAA-125 / DSM 18197 / FERM 7344 / JCM 9153 / C-125) (Bacillus halodurans), this protein is Mannonate dehydratase 1 (uxuA1).